The sequence spans 158 residues: C-type lectin BfL-2 (158 aa).

An N-terminal signal peptide occupies residues 1 to 21 (MGHFTFIGLCLLAMFLSLSGA). 4 disulfide bridges follow: Cys-26/Cys-37, Cys-54/Cys-154, Cys-61/Cys-156, and Cys-129/Cys-146. The 123-residue stretch at 33–155 (KNGLCYKVFS…CETLHPFICQ (123 aa)) folds into the C-type lectin domain. The Mannose-binding signature appears at 119 to 121 (EPN). The N-linked (GlcNAc...) asparagine glycan is linked to Asn-121. 3 residues coordinate Ca(2+): Glu-127, Asn-142, and Asp-143.

This sequence belongs to the true venom lectin family. As to quaternary structure, homodimer; non-covalently linked. In terms of tissue distribution, expressed by the venom gland.

The protein resides in the secreted. Its function is as follows. Mannose-binding lectin which recognizes specific carbohydrate structures and agglutinates a variety of animal cells by binding to cell-surface glycoproteins and glycolipids. May be a calcium-dependent lectin. This is C-type lectin BfL-2 from Bungarus fasciatus (Banded krait).